Reading from the N-terminus, the 798-residue chain is MSSTAHPTNLAPSGNGSAACVHCHRRKVRCDARLVGLPCSNCRSAGKTDCQIHEKKKKLAVRSILDPVPIRCRPPNPEEAPKPISSLSPSSEPPNAFTTALRAVQSDITAPSGVANRVAHIRSRSSQYDTKGTRSNNNSGNNTQYQNVLPEPDSPPYSRPAASDPSEGESRADIEKRLVNLIDGEASDSRAIQRGVRAIYVGHELSNMSFLIRQQRDTGDDVYHFAGNEIPRRQLRTGHDQLLMDALTLPEPALADELVHAYFAQVNPGYPIVEEELFMSQYRNRDPADAPPILLLQTILLVGAHVTRPKSERDTLKDIFFRRAKWLFDNRIERNRDILVQAALLLTWHSDLADDDVSANAHYWIGIAARIATGLGMHRNPVCSRFVPRDRRMWRRLWYILVQFDVMVSLSYGRPQALNLEDSDVSPLTFSDFEGCGARVQADFVIHFSELCTMISYIVRERFGLRISAERRKAALLEADEALANWSLRLPDRLRLRASDMDPWSAMLHLTYNNFLILLHRPHPRASAYSDDYGPHDAEICSAAAGVIASIFEELRIHDRLKQVWYSGVHTLFTAMIQVRVELRFSNPVLAINALRRFDSASYSLRELAQYWSHASTILRLFEESRRLQEDLRTTTSDRPRRFSNLSNNSTNSPASQQKNTSGIPHLANINSSDATPPSAPSIPPLQPSSQLSYEVPTTESAHHNPRSQPTLSAHTHTYTTQPFDTWIPSNNLTPMDTVDNSREMLDWRQLFSFTDLEGPVLPSTMEGITELEDEWRQIYWQETPMSDLLQDGGWMHG.

The segment at residues 20–50 is a DNA-binding region (zn(2)-C6 fungal-type); it reads CVHCHRRKVRCDARLVGLPCSNCRSAGKTDC. Disordered regions lie at residues 68–96, 115–172, and 632–714; these read VPIR…PPNA, ANRV…ESRA, and LRTT…TLSA. Low complexity-rich tracts occupy residues 82 to 94 and 133 to 147; these read KPIS…SEPP and TRSN…QYQN. The span at 632–641 shows a compositional bias: basic and acidic residues; it reads LRTTTSDRPR. Polar residues predominate over residues 644–663; it reads SNLSNNSTNSPASQQKNTSG. Pro residues predominate over residues 678–687; that stretch reads PSAPSIPPLQ.

Its subcellular location is the nucleus. In terms of biological role, positively regulates the expression of 5 genes involved in the catabolism of certain amides (amdS), omega amino acids (gatA and gabA), and lactams (lamA and lamB) in the presence of omega amino acid inducers. In Emericella nidulans (strain FGSC A4 / ATCC 38163 / CBS 112.46 / NRRL 194 / M139) (Aspergillus nidulans), this protein is Acetamidase regulatory protein (amdR).